Here is a 1234-residue protein sequence, read N- to C-terminus: DNA-directed RNA polymerase subunit beta (1234 aa).

The disordered stretch occupies residues glutamate 1169–histidine 1234. Acidic residues-rich tracts occupy residues valine 1171–valine 1180 and glutamate 1191–histidine 1234.

This sequence belongs to the RNA polymerase beta chain family. In terms of assembly, the RNAP catalytic core consists of 2 alpha, 1 beta, 1 beta' and 1 omega subunit. When a sigma factor is associated with the core the holoenzyme is formed, which can initiate transcription.

The catalysed reaction is RNA(n) + a ribonucleoside 5'-triphosphate = RNA(n+1) + diphosphate. In terms of biological role, DNA-dependent RNA polymerase catalyzes the transcription of DNA into RNA using the four ribonucleoside triphosphates as substrates. The chain is DNA-directed RNA polymerase subunit beta from Clostridium botulinum (strain Langeland / NCTC 10281 / Type F).